The sequence spans 556 residues: Amidophosphoribosyltransferase (556 aa).

A propeptide spanning residues 1-57 (MCLAVGVGVRAPKHVPQIRRLGRAGRRLRCVTNCALGSCPIVTVQQPGRDFSSPREE) is cleaved from the precursor. Cys-58 serves as the catalytic Nucleophile. Positions 58-284 (CGVFGVWAPG…PGELLAIDAD (227 aa)) constitute a Glutamine amidotransferase type-2 domain. [4Fe-4S] cluster is bound at residue Cys-299. Residues Ser-346, Asp-408, and Asp-409 each contribute to the Mg(2+) site. [4Fe-4S] cluster is bound by residues Cys-445, Cys-501, and Cys-504.

This sequence in the C-terminal section; belongs to the purine/pyrimidine phosphoribosyltransferase family. Requires Mg(2+) as cofactor. [4Fe-4S] cluster serves as cofactor.

It carries out the reaction 5-phospho-beta-D-ribosylamine + L-glutamate + diphosphate = 5-phospho-alpha-D-ribose 1-diphosphate + L-glutamine + H2O. It functions in the pathway purine metabolism; IMP biosynthesis via de novo pathway; N(1)-(5-phospho-D-ribosyl)glycinamide from 5-phospho-alpha-D-ribose 1-diphosphate: step 1/2. Functionally, catalyzes the formation of phosphoribosylamine from phosphoribosylpyrophosphate (PRPP) and glutamine. The sequence is that of Amidophosphoribosyltransferase from Mycobacterium leprae (strain TN).